A 239-amino-acid chain; its full sequence is Adenylate dimethylallyltransferase (239 aa).

Belongs to the isopentenyl transferase family.

The enzyme catalyses dimethylallyl diphosphate + AMP = N(6)-(dimethylallyl)adenosine 5'-phosphate + diphosphate. Transfers dimethylallyl groups to AMP as part of the biosynthesis of cytokinin phytohormones. The chain is Adenylate dimethylallyltransferase (ipt) from Rhizobium radiobacter (Agrobacterium tumefaciens).